The following is a 138-amino-acid chain: Small ribosomal subunit protein bS6 (138 aa).

Residues 94 to 138 (VKQDGPLPTPKPTSKENEPEKEEVKPTEEKTESPSKDEKKEDSKE) form a disordered region. Basic and acidic residues predominate over residues 106–138 (TSKENEPEKEEVKPTEEKTESPSKDEKKEDSKE).

It belongs to the bacterial ribosomal protein bS6 family.

Its function is as follows. Binds together with bS18 to 16S ribosomal RNA. The polypeptide is Small ribosomal subunit protein bS6 (Prochlorococcus marinus (strain NATL2A)).